The sequence spans 205 residues: ATP phosphoribosyltransferase (205 aa).

The protein belongs to the ATP phosphoribosyltransferase family. Short subfamily. In terms of assembly, heteromultimer composed of HisG and HisZ subunits.

It localises to the cytoplasm. The enzyme catalyses 1-(5-phospho-beta-D-ribosyl)-ATP + diphosphate = 5-phospho-alpha-D-ribose 1-diphosphate + ATP. Its pathway is amino-acid biosynthesis; L-histidine biosynthesis; L-histidine from 5-phospho-alpha-D-ribose 1-diphosphate: step 1/9. Its function is as follows. Catalyzes the condensation of ATP and 5-phosphoribose 1-diphosphate to form N'-(5'-phosphoribosyl)-ATP (PR-ATP). Has a crucial role in the pathway because the rate of histidine biosynthesis seems to be controlled primarily by regulation of HisG enzymatic activity. This Ruthia magnifica subsp. Calyptogena magnifica protein is ATP phosphoribosyltransferase.